Here is a 192-residue protein sequence, read N- to C-terminus: UPF0301 protein Bcep1808_0798 (192 aa).

It belongs to the UPF0301 (AlgH) family.

In Burkholderia vietnamiensis (strain G4 / LMG 22486) (Burkholderia cepacia (strain R1808)), this protein is UPF0301 protein Bcep1808_0798.